Reading from the N-terminus, the 78-residue chain is NAD(P)H-quinone oxidoreductase subunit L (78 aa).

Transmembrane regions (helical) follow at residues 10–30 and 47–67; these read IILIIYAALAGAYFLVMPAIV and VFMYFLMFLFFPGMLVLSPFL.

This sequence belongs to the complex I NdhL subunit family. NDH-1 can be composed of about 15 different subunits; different subcomplexes with different compositions have been identified which probably have different functions.

It is found in the cellular thylakoid membrane. It carries out the reaction a plastoquinone + NADH + (n+1) H(+)(in) = a plastoquinol + NAD(+) + n H(+)(out). The catalysed reaction is a plastoquinone + NADPH + (n+1) H(+)(in) = a plastoquinol + NADP(+) + n H(+)(out). Its function is as follows. NDH-1 shuttles electrons from an unknown electron donor, via FMN and iron-sulfur (Fe-S) centers, to quinones in the respiratory and/or the photosynthetic chain. The immediate electron acceptor for the enzyme in this species is believed to be plastoquinone. Couples the redox reaction to proton translocation, and thus conserves the redox energy in a proton gradient. Cyanobacterial NDH-1 also plays a role in inorganic carbon-concentration. This is NAD(P)H-quinone oxidoreductase subunit L from Trichodesmium erythraeum (strain IMS101).